The chain runs to 484 residues: Putative tyramine receptor 2 (484 aa).

Topologically, residues 1–54 (MVRVELQAASLMNGSSAAEEPQDALVGGDACGGRRPPSVLGVRLAVPEWEVAVT) are extracellular. Asparagine 13 carries an N-linked (GlcNAc...) asparagine glycan. Residues 55–77 (AVSLSLIILITIVGNVLVVLSVF) traverse the membrane as a helical segment. Residues 78–87 (TYKPLRIVQN) lie on the Cytoplasmic side of the membrane. Residues 88–109 (FFIVSLAVADLTVAVLVMPFNV) traverse the membrane as a helical segment. Residues 110–126 (AYSLIQRWVFGIVVCKM) are Extracellular-facing. The cysteines at positions 124 and 203 are disulfide-linked. A helical membrane pass occupies residues 127–147 (WLTCDVLCCTASILNLCAIAL). At 148-167 (DRYWAITDPINYAQKRTLRR) the chain is on the cytoplasmic side. The helical transmembrane segment at 168–190 (VLAMIAGVWLLSGVISSPPLIGW) threads the bilayer. At 191–215 (NDWPMEFNDTTPCQLTEEQGYVIYS) the chain is on the extracellular side. A glycan (N-linked (GlcNAc...) asparagine) is linked at asparagine 198. The helical transmembrane segment at 216–237 (SLGSFFIPLFIMTIVYVEIFIA) threads the bilayer. Over 238–411 (TKRRLRERAK…LSKERRAART (174 aa)) the chain is Cytoplasmic. Residues 253-280 (SAMKQQMAAQAVPSSVPSHDQESVSSET) show a composition bias toward polar residues. Disordered stretches follow at residues 253–322 (SAMK…PAMV) and 350–383 (TTTT…PTPV). Positions 295-306 (EKRRKTKKKSKK) are enriched in basic residues. The segment covering 350–360 (TTTTTTTTTTT) has biased composition (low complexity). A compositionally biased stretch (polar residues) spans 361 to 378 (AVTDSPRSRTASQKGSTA). Residues 412 to 433 (LGIIMGVFVVCWLPFFLMYVIV) form a helical membrane-spanning segment. Residues 434-448 (PFCNPSCKPSPKLVN) lie on the Extracellular side of the membrane. Residues 449-470 (FITWLGYINSALNPIIYTIFNL) form a helical membrane-spanning segment. The Cytoplasmic portion of the chain corresponds to 471-484 (DFRRAFKKLLHFKT).

It belongs to the G-protein coupled receptor 1 family.

Its subcellular location is the cell membrane. G-protein coupled receptor for tyramine, a known neurotransmitter and neuromodulator and direct precursor of octopamine. The sequence is that of Putative tyramine receptor 2 (GCR2) from Locusta migratoria (Migratory locust).